Consider the following 98-residue polypeptide: Keratin, high sulfur matrix protein, IIIB4 (98 aa).

Alanine 1 carries the post-translational modification N-acetylalanine.

It belongs to the KRTAP type 3 family. Interacts with wool keratins. As to expression, wool.

Its function is as follows. In the wool cortex, wool keratin intermediate filaments are embedded in an interfilamentous matrix, consisting of hair keratin-associated proteins (KRTAP), which are essential for the formation of a rigid and resistant wool shaft through their extensive disulfide bond cross-linking with abundant cysteine residues of wool keratins. The matrix proteins include the high-sulfur and high-glycine-tyrosine keratins. This chain is Keratin, high sulfur matrix protein, IIIB4, found in Ovis aries (Sheep).